We begin with the raw amino-acid sequence, 1066 residues long: MPKNNNIKKVLVIGSGPIVIGQAAEFDYAGTQACRSLKEEGVTVVLVNSNPATIMTDKDIADMVYIEPLTPDVVKKIILKEKPDSVLPTLGGQAALNIAMELEESGFLAETGTKLIGTTSLTIKKAEDRLEFKNTMEKIGEPCAASVVVTTVPAAVDFAETIGYPVVIRPAYTLGGSGGGIAADKEELIDICTNGLRLSRVGQCLIERCIAGWKEIEYEVMRDGAGNCITVCNMENLDPVGVHTGDSIVVAPSQTLSDKEYQMLRTSALNIITEINITGGCNVQYALKPDSFEYCVIEVNPRVSRSSALASKATGYPIAKVAAKIALGYTLDEIPNAITGKTVASFEPALDYCVVKIPKWPFDKFIMAKRTLTTQMKATGEVMSICTNFEGALMKAVRSLEQNIYSMNYGDYSKDSVEDIREKLHLIDDRRIFVIAEAIRRGITPEEINDITKIDLWFIDKIAILTEMEKRLSEEPLTKELMLEAKRMEFPDRVIAQFSGKTLEEVKKLRKEEYEIHAAFKTVDTCAAEFEAQTPYYYSCFDSENEVDATKTKKKVLVLGSGPIRIGQGIEFDYCSVHATWSMSKSGFETIIVNNNPETVSTDFDIADKLYFEPLTPEDVENIVDLEQPDGAVVQFGGQTAIKLTEALLKMGVPILGTSAENVDAAEDRELFDEILEKCCIPRPAGKTVFTTEEAIVAANQLGYPVLVRPSYVLGGAGMQIAICDDDVREFMEIINRNVQEHPILVDKYLMGKEVEVDAVCDGEDILIPGIMEHIERAGIHSGDSISVYPAQSISNKVQDVIVDYTRKLAKSLNVIGLINIQFIVYNEEVYVIEVNPRSSRTVPYISKVTNIPIVSLASKAVLGEKIADLGYGTGLAKKADYIAIKMPVFSFEKLRGADIGLGPEMKSTGECLGIAKTFNEALYKAFLGAGINLPKHKKMILTVKDADKLEAVSVGRRFKALGYEIYATRSTARVLKENGVDAIPVQKVDGESPTILDLLLGHEIDLVVDTPTQGRDKSRDGFVIRRMSIETGVTCLTSLDTANALLTSLENVADGELSLIDIARI.

The interval 1–401 (MPKNNNIKKV…ALMKAVRSLE (401 aa)) is carboxyphosphate synthetic domain. Positions 129, 169, 175, 176, 208, 210, 215, 241, 242, 243, 284, and 298 each coordinate ATP. The 195-residue stretch at 133 to 327 (KNTMEKIGEP…IAKVAAKIAL (195 aa)) folds into the ATP-grasp 1 domain. 3 residues coordinate Mg(2+): glutamine 284, glutamate 298, and asparagine 300. Residues glutamine 284, glutamate 298, and asparagine 300 each contribute to the Mn(2+) site. The interval 402–547 (QNIYSMNYGD…YSCFDSENEV (146 aa)) is oligomerization domain. The carbamoyl phosphate synthetic domain stretch occupies residues 548-931 (DATKTKKKVL…ALYKAFLGAG (384 aa)). Residues 673–863 (DEILEKCCIP…IVSLASKAVL (191 aa)) form the ATP-grasp 2 domain. ATP-binding residues include arginine 709, lysine 748, leucine 750, glutamate 754, glycine 779, isoleucine 780, histidine 781, serine 782, glutamine 822, and glutamate 834. 3 residues coordinate Mg(2+): glutamine 822, glutamate 834, and asparagine 836. The Mn(2+) site is built by glutamine 822, glutamate 834, and asparagine 836. Positions 932-1066 (INLPKHKKMI…ELSLIDIARI (135 aa)) constitute an MGS-like domain. An allosteric domain region spans residues 932–1066 (INLPKHKKMI…ELSLIDIARI (135 aa)).

It belongs to the CarB family. In terms of assembly, composed of two chains; the small (or glutamine) chain promotes the hydrolysis of glutamine to ammonia, which is used by the large (or ammonia) chain to synthesize carbamoyl phosphate. Tetramer of heterodimers (alpha,beta)4. Mg(2+) is required as a cofactor. Requires Mn(2+) as cofactor.

The catalysed reaction is hydrogencarbonate + L-glutamine + 2 ATP + H2O = carbamoyl phosphate + L-glutamate + 2 ADP + phosphate + 2 H(+). The enzyme catalyses hydrogencarbonate + NH4(+) + 2 ATP = carbamoyl phosphate + 2 ADP + phosphate + 2 H(+). The protein operates within amino-acid biosynthesis; L-arginine biosynthesis; carbamoyl phosphate from bicarbonate: step 1/1. It functions in the pathway pyrimidine metabolism; UMP biosynthesis via de novo pathway; (S)-dihydroorotate from bicarbonate: step 1/3. Its function is as follows. Large subunit of the glutamine-dependent carbamoyl phosphate synthetase (CPSase). CPSase catalyzes the formation of carbamoyl phosphate from the ammonia moiety of glutamine, carbonate, and phosphate donated by ATP, constituting the first step of 2 biosynthetic pathways, one leading to arginine and/or urea and the other to pyrimidine nucleotides. The large subunit (synthetase) binds the substrates ammonia (free or transferred from glutamine from the small subunit), hydrogencarbonate and ATP and carries out an ATP-coupled ligase reaction, activating hydrogencarbonate by forming carboxy phosphate which reacts with ammonia to form carbamoyl phosphate. In Lachnoclostridium phytofermentans (strain ATCC 700394 / DSM 18823 / ISDg) (Clostridium phytofermentans), this protein is Carbamoyl phosphate synthase large chain.